The following is a 169-amino-acid chain: Calfumirin-1 (169 aa).

4 consecutive EF-hand domains span residues 6–41 (NIVE…KKAF), 42–77 (NPER…DKAL), 93–128 (EVEE…TGAK), and 129–164 (DPEK…VQKL). The Ca(2+) site is built by aspartate 19, asparagine 21, aspartate 23, glutamate 25, glutamate 30, aspartate 55, aspartate 57, aspartate 59, lysine 61, glutamate 66, aspartate 108, asparagine 110, aspartate 112, glutamate 117, aspartate 142, asparagine 144, aspartate 146, threonine 148, and glutamate 153.

Its function is as follows. May be involved in the phase-shift of cells from growth to differentiation. The sequence is that of Calfumirin-1 (cafA) from Dictyostelium discoideum (Social amoeba).